Here is a 274-residue protein sequence, read N- to C-terminus: Large ribosomal subunit protein uL2cz/uL2cy (274 aa).

Residues 224–252 form a disordered region; the sequence is NPVDHPHGGGEGRAPIGRKKPVTPWGYPA.

This sequence belongs to the universal ribosomal protein uL2 family. As to quaternary structure, part of the 50S ribosomal subunit.

Its subcellular location is the plastid. It localises to the chloroplast. This chain is Large ribosomal subunit protein uL2cz/uL2cy (rpl2-A), found in Capsella bursa-pastoris (Shepherd's purse).